The sequence spans 436 residues: Enolase (436 aa).

Q167 serves as a coordination point for (2R)-2-phosphoglycerate. The active-site Proton donor is the E209. Mg(2+) contacts are provided by D246, E291, and D318. 4 residues coordinate (2R)-2-phosphoglycerate: K343, R372, S373, and K394. The active-site Proton acceptor is the K343.

This sequence belongs to the enolase family. As to quaternary structure, component of the RNA degradosome, a multiprotein complex involved in RNA processing and mRNA degradation. The cofactor is Mg(2+).

Its subcellular location is the cytoplasm. It is found in the secreted. It localises to the cell surface. The catalysed reaction is (2R)-2-phosphoglycerate = phosphoenolpyruvate + H2O. The protein operates within carbohydrate degradation; glycolysis; pyruvate from D-glyceraldehyde 3-phosphate: step 4/5. In terms of biological role, catalyzes the reversible conversion of 2-phosphoglycerate (2-PG) into phosphoenolpyruvate (PEP). It is essential for the degradation of carbohydrates via glycolysis. The protein is Enolase of Haemophilus influenzae (strain PittEE).